Reading from the N-terminus, the 430-residue chain is MRYFGTDGIRGVVNEFLTPELAFRLGNAVGNMVNGKVFIAKDTRNSGDMLEAALIAGITSAGADVYRCGIMPTPALALITKLEDAAGIMISASHNPPEYNGLKVIMKGYKLPDSLEERIENEMQNVKYNSFEKVGRVIDYRLAEEEYFNYIKELYKNLDLSGIKIVMDVANGATFNLNPKILEYFGAKIEVVNNEPDGFNINKDCGSTHPENIKNYIVNGKIGILHDGDGDRCIFLDENGQEFHGDKIIGLTALQLKKEGRLKNDKVVVTILSNMGLERFLNENSIDVVRTKVGDRYVLEEMLKENITLGGERSGHIIYLDRSTTGDGLITALETLSAMVNSGKRLADLSNLIPDYPQVMLNVKVSDKEVYKSKEVFEKLKSIKDYRVIVRPSGTEPVVRVLVEGPDMDESTIIANDIADLIKKFDNKKE.

S93 acts as the Phosphoserine intermediate in catalysis. Mg(2+)-binding residues include S93, D227, D229, and D231. S93 is subject to Phosphoserine.

This sequence belongs to the phosphohexose mutase family. The cofactor is Mg(2+). Activated by phosphorylation.

The catalysed reaction is alpha-D-glucosamine 1-phosphate = D-glucosamine 6-phosphate. Catalyzes the conversion of glucosamine-6-phosphate to glucosamine-1-phosphate. The protein is Phosphoglucosamine mutase of Thermosipho africanus (strain TCF52B).